The primary structure comprises 372 residues: NAD(P)H-quinone oxidoreductase subunit 1 (372 aa).

8 consecutive transmembrane segments (helical) span residues 27 to 47 (IIWL…GVLV), 97 to 117 (ILFT…WLIV), 128 to 148 (VGIG…GLLM), 176 to 196 (LALS…IDIV), 204 to 224 (ILSW…ICAL), 266 to 286 (ILSA…PIPV), 308 to 328 (SIGI…AILL), and 347 to 367 (FLLP…LAFP).

This sequence belongs to the complex I subunit 1 family. As to quaternary structure, NDH-1 is composed of at least 11 different subunits.

The protein resides in the cellular thylakoid membrane. It catalyses the reaction a plastoquinone + NADH + (n+1) H(+)(in) = a plastoquinol + NAD(+) + n H(+)(out). It carries out the reaction a plastoquinone + NADPH + (n+1) H(+)(in) = a plastoquinol + NADP(+) + n H(+)(out). NDH-1 shuttles electrons from an unknown electron donor, via FMN and iron-sulfur (Fe-S) centers, to quinones in the respiratory and/or the photosynthetic chain. The immediate electron acceptor for the enzyme in this species is believed to be plastoquinone. Couples the redox reaction to proton translocation, and thus conserves the redox energy in a proton gradient. The sequence is that of NAD(P)H-quinone oxidoreductase subunit 1 from Prochlorococcus marinus (strain MIT 9312).